The chain runs to 278 residues: MAIRKYKPTTPGRRGSSVADFVEITRTTPEKSLTRPLPKKGGRNNQGRITTRHQGGGHKRAYRLIDFRRYDKDGVPAKVAHIEYDPNRTARIALLHYVDGEKRYIIAPKDLTQGTRVESGPNADIKPGNNLPLRNIPVGTTIHCVELRPGGGAKIARSAGNSAQLVAREGSRATLRMPSGEMRFVDVRCRATVGEVGNAEQSNINWGKAGRMRWKGKRPTVRGVVMNPVDHPHGGGEGKTSGGRHPVSPWGQPEGRTRKRKASDSQIIRRRKTGKNKR.

2 disordered regions span residues Thr28–His58 and Gly223–Arg278. The span at Arg43–His53 shows a compositional bias: polar residues. Residues Ile268–Arg278 show a composition bias toward basic residues.

It belongs to the universal ribosomal protein uL2 family. Part of the 50S ribosomal subunit. Forms a bridge to the 30S subunit in the 70S ribosome.

In terms of biological role, one of the primary rRNA binding proteins. Required for association of the 30S and 50S subunits to form the 70S ribosome, for tRNA binding and peptide bond formation. It has been suggested to have peptidyltransferase activity; this is somewhat controversial. Makes several contacts with the 16S rRNA in the 70S ribosome. The sequence is that of Large ribosomal subunit protein uL2 from Nocardioides sp. (strain ATCC BAA-499 / JS614).